The primary structure comprises 265 residues: Small ribosomal subunit protein uS2 (265 aa).

Residues 231–265 (VEEEYEDYEGSEEDYDYDETEYADSVIPEDGEEAE) form a disordered region.

Belongs to the universal ribosomal protein uS2 family.

The chain is Small ribosomal subunit protein uS2 from Nostoc sp. (strain PCC 7120 / SAG 25.82 / UTEX 2576).